Consider the following 452-residue polypeptide: MGRLFGTDGVRGVANADLTAELALGLSVAAAHVLAEAGTFAGHRATAVVGRDPRASGEFLEAAVVAGLASAGVDVLRVGVLPTPAVAHLTGALGADLGVMLSASHNAMPDNGIKFFARGGHKLADELEDRIESVYADHRTGAPWDRPTGSGVGRVRDYDEGLDQYVAHLVGVLPNRLDGLKIVLDEAHGAASRVSPEAFARAGAELVTIGAVPDGLNINDGCGSTHLDLLKAAVVEHGADLGIAHDGDADRCLAVDHTGAEVDGDQILAVLALAMREREALRSDTVVATVMSNLGFKLAMEREGIRFVQTGVGDRYVLEEMKEHGYALGGEQSGHVIILDHATTGDGTLTGLMLAARVAQTGRTLRDLASVMERLPQVLVNVPDVDKSRVTSSAELATAVAEAERELGSTGRVLLRPSGTEPLVRVMVEAADIEQARSVAGRLADSVKSALG.

The active-site Phosphoserine intermediate is Ser-104. Residues Ser-104, Asp-246, Asp-248, and Asp-250 each coordinate Mg(2+). Ser-104 carries the phosphoserine modification.

This sequence belongs to the phosphohexose mutase family. Mg(2+) serves as cofactor. Post-translationally, activated by phosphorylation.

It carries out the reaction alpha-D-glucosamine 1-phosphate = D-glucosamine 6-phosphate. Catalyzes the conversion of glucosamine-6-phosphate to glucosamine-1-phosphate. The chain is Phosphoglucosamine mutase from Streptomyces coelicolor (strain ATCC BAA-471 / A3(2) / M145).